The primary structure comprises 219 residues: Probable lipoprotein YiaD (219 aa).

Positions 1-20 are cleaved as a signal peptide; the sequence is MKKRVYLIAAVVSGALAVSG. The N-palmitoyl cysteine moiety is linked to residue Cys21. Residue Cys21 is the site of S-diacylglycerol cysteine attachment. The next 2 membrane-spanning stretches (helical) occupy residues 37–55 and 62–84; these read IGAGLGSLVGAGIGALSSS and GALIGAAAGAALGGGVGYYMDVQ. The OmpA-like domain occupies 103-219; sequence GDNIILNMPN…RRVEITLSPL (117 aa).

The protein resides in the cell inner membrane. It localises to the cell outer membrane. Suppresses temperature-sensitive mutations in BamB when overexpressed. This is Probable lipoprotein YiaD (yiaD) from Escherichia coli (strain K12).